Reading from the N-terminus, the 422-residue chain is Serpin A11 (422 aa).

An N-terminal signal peptide occupies residues 1-24 (MGPVWLWLLIAELLLPVHYQPSSA). The disordered stretch occupies residues 25 to 45 (HGDKSLGAPQPASHQSLEPAP). N-linked (GlcNAc...) asparagine glycosylation is found at asparagine 106, asparagine 169, asparagine 350, and asparagine 385.

Belongs to the serpin family.

The protein resides in the secreted. The polypeptide is Serpin A11 (Serpina11) (Rattus norvegicus (Rat)).